Here is a 152-residue protein sequence, read N- to C-terminus: Troponin C (152 aa).

Residue Thr1 is modified to N-acetylthreonine. EF-hand domains lie at 9 to 44, 45 to 80, 82 to 117, and 118 to 152; these read KQIL…LGLL, VKDD…KLKE, LDER…LGDE, and LTEE…SSDA. Residues Asp131, Asp133, Ser135, Thr137, and Glu142 each contribute to the Ca(2+) site.

The protein belongs to the troponin C family.

In terms of biological role, troponin is the central regulatory protein of striated muscle contraction. Tn consists of three components: Tn-I which is the inhibitor of actomyosin ATPase, Tn-T which contains the binding site for tropomyosin and Tn-C. The binding of calcium to Tn-C abolishes the inhibitory action of Tn on actin filaments. The sequence is that of Troponin C from Mizuhopecten yessoensis (Japanese scallop).